Here is a 358-residue protein sequence, read N- to C-terminus: Peptide chain release factor 1 (358 aa).

N5-methylglutamine is present on Gln-235.

Belongs to the prokaryotic/mitochondrial release factor family. Methylated by PrmC. Methylation increases the termination efficiency of RF1.

The protein localises to the cytoplasm. Peptide chain release factor 1 directs the termination of translation in response to the peptide chain termination codons UAG and UAA. The protein is Peptide chain release factor 1 of Brachyspira hyodysenteriae (strain ATCC 49526 / WA1).